The chain runs to 201 residues: GTP cyclohydrolase 1 (201 aa).

Zn(2+) is bound by residues C90, H93, and C163.

Belongs to the GTP cyclohydrolase I family. Homomer.

The catalysed reaction is GTP + H2O = 7,8-dihydroneopterin 3'-triphosphate + formate + H(+). It functions in the pathway cofactor biosynthesis; 7,8-dihydroneopterin triphosphate biosynthesis; 7,8-dihydroneopterin triphosphate from GTP: step 1/1. This Streptomyces griseus subsp. griseus (strain JCM 4626 / CBS 651.72 / NBRC 13350 / KCC S-0626 / ISP 5235) protein is GTP cyclohydrolase 1.